The primary structure comprises 432 residues: Pachytene checkpoint protein 2 homolog (432 aa).

Residue M1 is modified to N-acetylmethionine. 179 to 186 contacts ATP; it reads GPPGTGKT.

Belongs to the AAA ATPase family. PCH2 subfamily. In terms of assembly, specifically interacts with the ligand binding domain of the thyroid receptor (TR). This interaction does not require the presence of thyroid hormone for its interaction. Interacts with proteasome subunit PSMA8; to participate in meiosis progression during spermatogenesis.

In terms of biological role, plays a key role in chromosome recombination and chromosome structure development during meiosis. Required at early steps in meiotic recombination that leads to non-crossovers pathways. Also needed for efficient completion of homologous synapsis by influencing crossover distribution along the chromosomes affecting both crossovers and non-crossovers pathways. Also required for development of higher-order chromosome structures and is needed for synaptonemal-complex formation. In males, required for efficient synapsis of the sex chromosomes and for sex body formation. Promotes early steps of the DNA double-strand breaks (DSBs) repair process upstream of the assembly of RAD51 complexes. Required for depletion of HORMAD1 and HORMAD2 from synapsed chromosomes. In Canis lupus familiaris (Dog), this protein is Pachytene checkpoint protein 2 homolog (TRIP13).